Consider the following 227-residue polypeptide: Phosphoribosylformylglycinamidine synthase subunit PurQ (227 aa).

The Glutamine amidotransferase type-1 domain maps to 3–225; the sequence is FAVIVFPGSN…LKQWRETYVV (223 aa). Cys86 serves as the catalytic Nucleophile. Catalysis depends on residues His194 and Glu196.

In terms of assembly, part of the FGAM synthase complex composed of 1 PurL, 1 PurQ and 2 PurS subunits.

It localises to the cytoplasm. It carries out the reaction N(2)-formyl-N(1)-(5-phospho-beta-D-ribosyl)glycinamide + L-glutamine + ATP + H2O = 2-formamido-N(1)-(5-O-phospho-beta-D-ribosyl)acetamidine + L-glutamate + ADP + phosphate + H(+). It catalyses the reaction L-glutamine + H2O = L-glutamate + NH4(+). It participates in purine metabolism; IMP biosynthesis via de novo pathway; 5-amino-1-(5-phospho-D-ribosyl)imidazole from N(2)-formyl-N(1)-(5-phospho-D-ribosyl)glycinamide: step 1/2. Part of the phosphoribosylformylglycinamidine synthase complex involved in the purines biosynthetic pathway. Catalyzes the ATP-dependent conversion of formylglycinamide ribonucleotide (FGAR) and glutamine to yield formylglycinamidine ribonucleotide (FGAM) and glutamate. The FGAM synthase complex is composed of three subunits. PurQ produces an ammonia molecule by converting glutamine to glutamate. PurL transfers the ammonia molecule to FGAR to form FGAM in an ATP-dependent manner. PurS interacts with PurQ and PurL and is thought to assist in the transfer of the ammonia molecule from PurQ to PurL. The protein is Phosphoribosylformylglycinamidine synthase subunit PurQ of Bacillus cereus (strain 03BB102).